A 396-amino-acid polypeptide reads, in one-letter code: Subtilisin-like protease 5 (396 aa).

Residues 1–20 (MTGFFTILSFSLAALSVTNA) form the signal peptide. Residues 21-116 (AQILSVPKGA…VEPDAIISQH (96 aa)) constitute a propeptide that is removed on maturation. Residues 37-113 (YIVVMKDDTS…VAFVEPDAII (77 aa)) enclose the Inhibitor I9 domain. The N-linked (GlcNAc...) asparagine glycan is linked to asparagine 63. One can recognise a Peptidase S8 domain in the interval 125–396 (PWGLSRLSNR…SRLLYNGSGR (272 aa)). Active-site charge relay system residues include aspartate 156 and histidine 187. N-linked (GlcNAc...) asparagine glycans are attached at residues asparagine 230 and asparagine 248. Residue serine 342 is the Charge relay system of the active site. Residues 376–389 (PTIRNPGPDTTSRL) show a composition bias toward polar residues. The tract at residues 376–396 (PTIRNPGPDTTSRLLYNGSGR) is disordered. An N-linked (GlcNAc...) asparagine glycan is attached at asparagine 392.

It belongs to the peptidase S8 family.

Its subcellular location is the secreted. Secreted subtilisin-like serine protease with keratinolytic activity that contributes to pathogenicity. In Trichophyton verrucosum (Cattle ringworm fungus), this protein is Subtilisin-like protease 5 (SUB5).